The sequence spans 265 residues: MTPAPTPRTDQLHGSRVLVIGGTSGIGFAVCAAALGHGAIVTIVGSNAQKLKDSVARLKSSFPSTDPDDIVAVRCDLSNSDTVEQDIEKALQLAAGNSKINHIVITAADMTAPPPLEDLTVDSVQRPGIIRLVAPLMVAKHLPKYMNKCPQSSLTLTSGAHCLRPDPGWTVISGYCGAVEAMSRGLAIDLKPLRVNVVAPGAVLTEAVKDILGDAYDAAVEMAEAKSTVGQTGSPESVAQAYIYLMKDHYASGSVVSTNGGMLLV.

T23, S24, I26, S46, N47, K50, D76, R131, V203, and T205 together coordinate NADP(+). The chain crosses the membrane as a helical span at residues 25–45 (GIGFAVCAAALGHGAIVTIVG).

Belongs to the short-chain dehydrogenases/reductases (SDR) family. The cofactor is NADP(+).

Its subcellular location is the membrane. It functions in the pathway alkaloid biosynthesis. Short-chain dehydrogenase/reductase; part of the gene cluster that mediates the biosynthesis of paraherquamide, a fungal indole alkaloid that belongs to a family of natural products containing a characteristic bicyclo[2.2.2]diazaoctane core. The first steps in the biosynthesis of paraherquamide is the production of the beta-methyl-proline precursor from L-isoleucine. They require oxidation of a terminally hydroxylated L-isoleucine to the corresponding aldehyde by enzymes which have still to be identified. Spontaneous cyclization and dehydration would yield the 4-methyl pyrolline-5-carboxylic acid, which is then reduced by the pyrroline-5-carboxylate reductase phqD leading to the beta-methyl-proline precursor. The next step of paraherquamide biosynthesis involves coupling of beta-methyl-proline and L-tryptophan by the bimodular NRPS phqB, to produce a monooxopiperazine intermediate. The reductase (R) domain of phqB utilizes NADPH for hydride transfer to reduce the thioester bond of the T domain-tethered linear dipeptide to a hemithioaminal intermediate, which spontaneously cleaves the C-S bond to release the aldehyde product. This compound undergoes spontaneous cyclization and dehydration to give a dienamine which is reverse prenylated at C-2 by the reverse prenyltransferase phqJ. The other prenyltransferase present in the cluster, phqI may be a redundant gene in the pathway. During biosynthetic assembly, the key step to produce the polycyclic core is catalyzed by the bifunctional reductase and intramolecular [4+2] Diels-Alderase, phqE, resulting in formation of the [2.2.2] diazaoctane intermediate preparaherquamide. Following formation of preparaherquamide, an indole 2,3-epoxidation-initiated pinacol-like rearrangement is catalyzed by the phqK FAD-dependent monooxygenase. The prenyltransferase phqA, the cytochrome P450 monooxygenase phqL, and the FAD-linked oxidoreductase phqH (or the cytochrome P450 monooxygenase phqM), are proposed to be involved in the formation of the pyran ring. The FAD-dependent monooxygenase phqK is likely responsible for generation of the spiro-oxindole, and the N-methylation is likely mediated by the phqN methyltransferase leading to the isolable natural product paraherquamide F. However, the order of these biosynthetic steps has still to be determined. In late-stage paraherquamide biosynthesis, the third P450 monooxygenase, phqO, is probably responsible for the C-14 hydroxylation, transforming paraherquamide F to paraherquamide G, and paraherquamide E to the final product paraherquamide A. The expansion from the 6-membered ring pyran (in paraherquamides F and G) to the 7-membered dioxepin ring (in paraherquamides A and E) represents a poorly understood but intriguing process that probably involves the 2-oxoglutarate-dependent dioxygenase phqC. Finally, the remaining members of the paraherquamide cluster, including phqI as well as phqM (or phqH), do not have a clearly prescribed role and appear to be redundant. This chain is Short-chain dehydrogenase/reductase phqE, found in Penicillium fellutanum.